A 101-amino-acid polypeptide reads, in one-letter code: Large ribosomal subunit protein uL23 (101 aa).

The protein belongs to the universal ribosomal protein uL23 family. As to quaternary structure, part of the 50S ribosomal subunit. Contacts protein L29, and trigger factor when it is bound to the ribosome.

In terms of biological role, one of the early assembly proteins it binds 23S rRNA. One of the proteins that surrounds the polypeptide exit tunnel on the outside of the ribosome. Forms the main docking site for trigger factor binding to the ribosome. This is Large ribosomal subunit protein uL23 from Synechocystis sp. (strain ATCC 27184 / PCC 6803 / Kazusa).